We begin with the raw amino-acid sequence, 402 residues long: Propionate kinase (402 aa).

ATP is bound by residues asparagine 11 and lysine 18. A Mg(2+)-binding site is contributed by asparagine 11. Position 86 (arginine 86) interacts with substrate. Aspartate 143 acts as the Proton donor/acceptor in catalysis. Residues histidine 175, 203–207, 278–280, and 326–330 each bind ATP; these read HLGNG, DLR, and GIGEN.

Belongs to the acetokinase family. TdcD subfamily. As to quaternary structure, homodimer. Mg(2+) serves as cofactor.

It catalyses the reaction propanoate + ATP = propanoyl phosphate + ADP. The protein operates within amino-acid degradation; L-threonine degradation via propanoate pathway; propanoate from L-threonine: step 4/4. In terms of biological role, catalyzes the conversion of propionyl phosphate and ADP to propionate and ATP. The chain is Propionate kinase from Escherichia coli O6:H1 (strain CFT073 / ATCC 700928 / UPEC).